The chain runs to 465 residues: GTPase Der (465 aa).

EngA-type G domains lie at 3-166 (FLVA…LNEY) and 184-358 (IHFS…ACAN). Residues 9–16 (GRANVGKS), 56–60 (DTGGI), 118–121 (NKVD), 190–197 (GRPNVGKS), 237–241 (DTAGV), and 302–305 (NKWD) each bind GTP. Residues 359-443 (KKITTADATR…PIVFEFKQSE (85 aa)) form the KH-like domain. A disordered region spans residues 446-465 (FADRKNKRSKDEGSKSKKVK).

This sequence belongs to the TRAFAC class TrmE-Era-EngA-EngB-Septin-like GTPase superfamily. EngA (Der) GTPase family. Associates with the 50S ribosomal subunit.

Its function is as follows. GTPase that plays an essential role in the late steps of ribosome biogenesis. The chain is GTPase Der from Francisella tularensis subsp. novicida (strain U112).